A 188-amino-acid polypeptide reads, in one-letter code: GTPase KRas (188 aa).

Residues 10 to 18 (GAGGVGKSA), 29 to 35 (VDEYDPT), 59 to 60 (AG), and 116 to 119 (NKYD) contribute to the GTP site. The Effector region motif lies at 32–40 (YDPTIEDSY). Positions 167 to 188 (KEKMSKEGKKKKKKSKTKCILM) are disordered. Cys185 carries the post-translational modification Cysteine methyl ester. Cys185 carries S-farnesyl cysteine lipidation. A propeptide spans 186–188 (ILM) (removed in mature form).

The protein belongs to the small GTPase superfamily. Ras family.

Its subcellular location is the cell membrane. The protein localises to the cytoplasm. It carries out the reaction GTP + H2O = GDP + phosphate + H(+). Its activity is regulated as follows. Alternates between an inactive form bound to GDP and an active form bound to GTP. Activated by a guanine nucleotide-exchange factor (GEF) and inactivated by a GTPase-activating protein (GAP). In terms of biological role, ras proteins bind GDP/GTP and possess intrinsic GTPase activity. Plays an important role in the regulation of cell proliferation. May play a role in promoting oncogenic events by inducing transcriptional silencing of tumor suppressor genes (TSGs). This Kryptolebias marmoratus (Mangrove killifish) protein is GTPase KRas (kras).